We begin with the raw amino-acid sequence, 648 residues long: Penicillin-binding protein PbpB (648 aa).

Positions 1 to 35 are disordered; sequence MSRRGDRPRTPAQPRKKARVDQPRSARTRRTRVSE. A helical membrane pass occupies residues 52–72; it reads GNLAILAVLVIAAVQLFMLQV. Residue S355 is the Acyl-ester intermediate of the active site.

This sequence belongs to the transpeptidase family. Interacts with Wag31.

The protein localises to the cell membrane. The chain is Penicillin-binding protein PbpB (pbpB) from Mycolicibacterium smegmatis (strain ATCC 700084 / mc(2)155) (Mycobacterium smegmatis).